Here is a 217-residue protein sequence, read N- to C-terminus: Melanocortin-2 receptor accessory protein 2A (217 aa).

The N-linked (GlcNAc...) asparagine glycan is linked to Asn-8. The helical transmembrane segment at 42–62 threads the bilayer; sequence IVIGFWVGLAVFVIFMFFVLT.

The protein belongs to the MRAP family. Interacts with mc4r.

Its subcellular location is the cell membrane. The protein localises to the endoplasmic reticulum membrane. Its function is as follows. Inhibitor of melanocortin receptor 4 (mc4r), a receptor involved in energy homeostasis. Plays a role during larval development in the control of energy homeostasis and body weight regulation by decreasing ligand-sensitivity of mc4r and mc4r-mediated generation of cAMP, leading to stimulate growth during larval development. Acts by stabilizing an inactive conformation of mc4r during embryonic development, when all the energy consumed is obtained from the yolk sac, possibly to speed the rapid maturation to the mobile free-feeding juvenile stage reached at 5 dpf. The polypeptide is Melanocortin-2 receptor accessory protein 2A (mrap2a) (Danio rerio (Zebrafish)).